Here is a 464-residue protein sequence, read N- to C-terminus: Mitogen-activated protein kinase 10 (464 aa).

The region spanning 64–359 (YQNLKPIGSG…VDDALQHPYI (296 aa)) is the Protein kinase domain. Residues 70–78 (IGSGAQGIV) and K93 each bind ATP. D189 (proton acceptor) is an active-site residue. T221 is modified (phosphothreonine; by MAP2K7). Positions 221–223 (TPY) match the TXY motif. Y223 carries the post-translational modification Phosphotyrosine; by MAP2K4. Residues 405–464 (TKNGVVKSQPSPSGAAVNSSESLPPSSAVNDISSMSTDQTLASDTDSSLEASAGPLGCCR) are disordered. Positions 410-454 (VKSQPSPSGAAVNSSESLPPSSAVNDISSMSTDQTLASDTDSSLE) are enriched in polar residues. 2 S-palmitoyl cysteine lipidation sites follow: C462 and C463.

This sequence belongs to the protein kinase superfamily. CMGC Ser/Thr protein kinase family. MAP kinase subfamily. As to quaternary structure, interacts with MAPK8IP1/JIP-1, MAPK8IP3/JIP-3/JSAP1 and SPAG9/MAPK8IP4/JIP4. Interacts with HDAC9 and MAPKBP1. Interacts with ARRB2; the interaction enhances MAPK10 activation by MAP3K5. Interacts with SARM1. Interacts with JUND; interaction is inhibited in the presence of MEN1. Mg(2+) is required as a cofactor. Post-translationally, dually phosphorylated on Thr-221 and Tyr-223 by MAP2K4 and MAP2K7, which activates the enzyme. MAP2K7 shows a strong preference for Thr-221 while MAP2K4 phosphorylates Tyr-223 preferentially. Weakly autophosphorylated on threonine and tyrosine residues in vitro. In terms of processing, palmitoylation regulates subcellular location and axonal development. Brain (at protein level). Expressed specifically in neurons of the hippocampus, cortex, cerebellum, brainstem, and spinal cord. Seems to be also found in testis, and very weakly in the heart.

It localises to the cytoplasm. Its subcellular location is the membrane. The protein resides in the nucleus. It is found in the mitochondrion. It carries out the reaction L-seryl-[protein] + ATP = O-phospho-L-seryl-[protein] + ADP + H(+). The catalysed reaction is L-threonyl-[protein] + ATP = O-phospho-L-threonyl-[protein] + ADP + H(+). Its activity is regulated as follows. Activated by threonine and tyrosine phosphorylation by two dual specificity kinases, MAP2K4 and MAP2K7. MAP2K7 phosphorylates MAPK10 on Thr-221 causing a conformational change and a large increase in Vmax for the enzyme. MAP2K4 then phosphorylates Tyr-223 resulting in a further increase in Vmax. Inhibited by dual specificity phosphatases, such as DUSP1. Inhibited by HDAC9. Serine/threonine-protein kinase involved in various processes such as neuronal proliferation, differentiation, migration and programmed cell death. Extracellular stimuli such as pro-inflammatory cytokines or physical stress stimulate the stress-activated protein kinase/c-Jun N-terminal kinase (SAP/JNK) signaling pathway. In this cascade, two dual specificity kinases MAP2K4/MKK4 and MAP2K7/MKK7 phosphorylate and activate MAPK10/JNK3. In turn, MAPK10/JNK3 phosphorylates a number of transcription factors, primarily components of AP-1 such as JUN and ATF2 and thus regulates AP-1 transcriptional activity. Plays regulatory roles in the signaling pathways during neuronal apoptosis. Phosphorylates the neuronal microtubule regulator STMN2. Acts in the regulation of the amyloid-beta precursor protein/APP signaling during neuronal differentiation by phosphorylating APP. Also participates in neurite growth in spiral ganglion neurons. Phosphorylates the CLOCK-BMAL1 heterodimer and plays a role in the photic regulation of the circadian clock. Phosphorylates JUND and this phosphorylation is inhibited in the presence of MEN1. The sequence is that of Mitogen-activated protein kinase 10 (Mapk10) from Mus musculus (Mouse).